Reading from the N-terminus, the 45-residue chain is Large ribosomal subunit protein bL34 (45 aa).

It belongs to the bacterial ribosomal protein bL34 family.

The protein is Large ribosomal subunit protein bL34 of Arthrobacter sp. (strain FB24).